The chain runs to 641 residues: SH2 domain-containing protein A (641 aa).

The segment at 355-384 (VNGNGTSMEWRPQNHEEDNSSTDSENTEMR) is disordered. An SH2 domain is found at 547-641 (WIEGFVTKEE…SRLGRIIRGI (95 aa)).

Phosphorylated on tyrosine residues. Expressed in roots, leaves, stems and flowers.

This Arabidopsis thaliana (Mouse-ear cress) protein is SH2 domain-containing protein A.